The sequence spans 316 residues: Ribosomal RNA small subunit methyltransferase H (316 aa).

S-adenosyl-L-methionine-binding positions include 37 to 39 (GGH), Asp56, Phe83, Asp106, and His113. Residues 276–316 (PILPSEEETKENPASRSAKLRVLRKTKSADKKYKKENSKEE) form a disordered region. Over residues 302 to 316 (KSADKKYKKENSKEE) the composition is skewed to basic and acidic residues.

Belongs to the methyltransferase superfamily. RsmH family.

Its subcellular location is the cytoplasm. It carries out the reaction cytidine(1402) in 16S rRNA + S-adenosyl-L-methionine = N(4)-methylcytidine(1402) in 16S rRNA + S-adenosyl-L-homocysteine + H(+). In terms of biological role, specifically methylates the N4 position of cytidine in position 1402 (C1402) of 16S rRNA. This Leptospira borgpetersenii serovar Hardjo-bovis (strain L550) protein is Ribosomal RNA small subunit methyltransferase H.